Reading from the N-terminus, the 438-residue chain is Putative truncated GMC-type inactive oxidoreductase L894 (438 aa).

Residues 1 to 26 form the signal peptide; it reads MYVFLLFSRYKIFYVYIKKMAHRSRC. 79-109 contributes to the FAD binding site; sequence DIVIIGAGAAGCVLAYYLTKFSDLKIILLEA.

Belongs to the GMC oxidoreductase family. The cofactor is FAD.

It is found in the virion. In Acanthamoeba polyphaga (Amoeba), this protein is Putative truncated GMC-type inactive oxidoreductase L894.